Reading from the N-terminus, the 122-residue chain is Large ribosomal subunit protein uL14 (122 aa).

This sequence belongs to the universal ribosomal protein uL14 family. Part of the 50S ribosomal subunit. Forms a cluster with proteins L3 and L19. In the 70S ribosome, L14 and L19 interact and together make contacts with the 16S rRNA in bridges B5 and B8.

Its function is as follows. Binds to 23S rRNA. Forms part of two intersubunit bridges in the 70S ribosome. The polypeptide is Large ribosomal subunit protein uL14 (Jannaschia sp. (strain CCS1)).